Consider the following 208-residue polypeptide: Imidazoleglycerol-phosphate dehydratase (208 aa).

It belongs to the imidazoleglycerol-phosphate dehydratase family.

The protein resides in the cytoplasm. The enzyme catalyses D-erythro-1-(imidazol-4-yl)glycerol 3-phosphate = 3-(imidazol-4-yl)-2-oxopropyl phosphate + H2O. The protein operates within amino-acid biosynthesis; L-histidine biosynthesis; L-histidine from 5-phospho-alpha-D-ribose 1-diphosphate: step 6/9. This is Imidazoleglycerol-phosphate dehydratase from Pseudarthrobacter chlorophenolicus (strain ATCC 700700 / DSM 12829 / CIP 107037 / JCM 12360 / KCTC 9906 / NCIMB 13794 / A6) (Arthrobacter chlorophenolicus).